We begin with the raw amino-acid sequence, 361 residues long: S-adenosylmethionine:tRNA ribosyltransferase-isomerase (361 aa).

The protein belongs to the QueA family. Monomer.

Its subcellular location is the cytoplasm. It catalyses the reaction 7-aminomethyl-7-carbaguanosine(34) in tRNA + S-adenosyl-L-methionine = epoxyqueuosine(34) in tRNA + adenine + L-methionine + 2 H(+). The protein operates within tRNA modification; tRNA-queuosine biosynthesis. Functionally, transfers and isomerizes the ribose moiety from AdoMet to the 7-aminomethyl group of 7-deazaguanine (preQ1-tRNA) to give epoxyqueuosine (oQ-tRNA). This chain is S-adenosylmethionine:tRNA ribosyltransferase-isomerase, found in Rhizobium etli (strain ATCC 51251 / DSM 11541 / JCM 21823 / NBRC 15573 / CFN 42).